We begin with the raw amino-acid sequence, 568 residues long: Protein yellow (568 aa).

The N-terminal stretch at 1-28 is a signal peptide; sequence MHAQDKGGILPALSLLLIAVAMVSPSQA. 2 N-linked (GlcNAc...) asparagine glycosylation sites follow: Asn-151 and Asn-222.

The protein belongs to the major royal jelly protein family.

Its subcellular location is the secreted. Its function is as follows. Controls the pigmentation pattern of the adult cuticle and larval mouth parts. This is Protein yellow (y) from Drosophila subobscura (Fruit fly).